The following is a 338-amino-acid chain: uncharacterized protein (338 aa).

It belongs to the MG032/MG096/MG288 family.

This is an uncharacterized protein from Mycoplasma pneumoniae (strain ATCC 29342 / M129 / Subtype 1) (Mycoplasmoides pneumoniae).